A 174-amino-acid polypeptide reads, in one-letter code: Crossover junction endodeoxyribonuclease RuvC (174 aa).

Active-site residues include Asp8, Glu67, and Asp139. 3 residues coordinate Mg(2+): Asp8, Glu67, and Asp139.

It belongs to the RuvC family. Homodimer which binds Holliday junction (HJ) DNA. The HJ becomes 2-fold symmetrical on binding to RuvC with unstacked arms; it has a different conformation from HJ DNA in complex with RuvA. In the full resolvosome a probable DNA-RuvA(4)-RuvB(12)-RuvC(2) complex forms which resolves the HJ. Mg(2+) is required as a cofactor.

It is found in the cytoplasm. It catalyses the reaction Endonucleolytic cleavage at a junction such as a reciprocal single-stranded crossover between two homologous DNA duplexes (Holliday junction).. Functionally, the RuvA-RuvB-RuvC complex processes Holliday junction (HJ) DNA during genetic recombination and DNA repair. Endonuclease that resolves HJ intermediates. Cleaves cruciform DNA by making single-stranded nicks across the HJ at symmetrical positions within the homologous arms, yielding a 5'-phosphate and a 3'-hydroxyl group; requires a central core of homology in the junction. The consensus cleavage sequence is 5'-(A/T)TT(C/G)-3'. Cleavage occurs on the 3'-side of the TT dinucleotide at the point of strand exchange. HJ branch migration catalyzed by RuvA-RuvB allows RuvC to scan DNA until it finds its consensus sequence, where it cleaves and resolves the cruciform DNA. This is Crossover junction endodeoxyribonuclease RuvC from Pseudomonas aeruginosa (strain LESB58).